A 96-amino-acid chain; its full sequence is Prokineticin Bm8-e (96 aa).

The signal sequence occupies residues 1 to 19 (MKCFAQIVVLLLVIAFSHG). 5 cysteine pairs are disulfide-bonded: Cys-26/Cys-38, Cys-32/Cys-50, Cys-37/Cys-78, Cys-60/Cys-86, and Cys-80/Cys-95.

The protein belongs to the AVIT (prokineticin) family. In terms of tissue distribution, expressed by the skin glands.

The protein resides in the secreted. Functionally, potent agonist for both PKR1/PROKR1 and PKR2/PROKR2, and inducer of a potent and long-lasting hyperalgesia. Also potentiates capsaicin-induced TRPV1 current, when tested on DRG neurons. At subnanomolar concentrations, this protein both induces potent chemotaxis of macrophages and stimulates LPS-induced production of the pro-inflammatory cytokines IL-1 and IL-12. In vivo, potently stimulates the contraction of the guinea-pig gastrointestinal (GI) smooth muscle (nanomolar concentration). The polypeptide is Prokineticin Bm8-e (Bombina maxima (Giant fire-bellied toad)).